The following is a 344-amino-acid chain: Transcription factor HRS1 (344 aa).

Positions 88–184 (IKDSSTSNEE…DGGGGRKQRR (97 aa)) are disordered. A compositionally biased stretch (acidic residues) spans 95–104 (NEEEDEEFDD). Composition is skewed to basic and acidic residues over residues 105–124 (EHGN…KSDW) and 138–178 (LLPK…DGGG). The region spanning 178-238 (GGRKQRRCWS…HLQKYRLHTR (61 aa)) is the HTH myb-type domain. Residues 209–234 (PKQIREFMKVDGLTNDEVKSHLQKYR) constitute a DNA-binding region (H-T-H motif). Low complexity predominate over residues 269-291 (STGKTTGGATTSSTTTTTGIYGT). Residues 269 to 322 (STGKTTGGATTSSTTTTTGIYGTMAAPPPPQWPSHSNYRPSIIVDEGSGSHSEG) are disordered.

As to expression, expressed in the root hair region and root hair cells.

It localises to the nucleus. Functionally, transcription factor involved in nitrate and phosphate signaling in roots. Integrates nitrate and phosphate starvation responses and adaptation of root architecture depending on nutrient availabilities. Acts downstream of the nitrate sensor and transporter NPF6.3/NRT1.1. Represses primary root development in response to phosphate deficiency conditions, only when nitrate is present. Involved in the modulation of primary root and root hair growth in phosphate-deprived environment. May be required for suppressing abscisic acid (ABA) signaling in germinating embryo axis, which promotes the timely germination of seeds. The polypeptide is Transcription factor HRS1 (Arabidopsis thaliana (Mouse-ear cress)).